The following is a 336-amino-acid chain: HTH-type transcriptional regulator RafR (336 aa).

Residues 2–55 (SLKAIATTLGISVTTVSRALGGFSDVAASTRERVEAEARRRGYRPNTQARRLKT) enclose the HTH lacI-type domain. A DNA-binding region (H-T-H motif) is located at residues 3–22 (LKAIATTLGISVTTVSRALG).

Homodimer.

In terms of biological role, repressor that negatively controls the expression of the raffinose (raf) operon by binding to the raf operator (rafO) DNA. Acts by binding to two operator sites, O1 and 02, which flank the -35 raf promoter box. RafR bound to 02 alone results in 45 % repression of transcription, whereas RafR bound to O1 leads to only 6% repression. This is HTH-type transcriptional regulator RafR from Escherichia coli.